The chain runs to 381 residues: 8-amino-7-oxononanoate synthase (381 aa).

A substrate-binding site is contributed by R27. 105-106 (GY) serves as a coordination point for pyridoxal 5'-phosphate. H130 contributes to the substrate binding site. Pyridoxal 5'-phosphate-binding positions include S176, 201–204 (DEAH), and 232–235 (TLSK). An N6-(pyridoxal phosphate)lysine modification is found at K235. T345 is a binding site for substrate.

It belongs to the class-II pyridoxal-phosphate-dependent aminotransferase family. BioF subfamily. As to quaternary structure, homodimer. Pyridoxal 5'-phosphate is required as a cofactor.

The enzyme catalyses 6-carboxyhexanoyl-[ACP] + L-alanine + H(+) = (8S)-8-amino-7-oxononanoate + holo-[ACP] + CO2. It functions in the pathway cofactor biosynthesis; biotin biosynthesis. In terms of biological role, catalyzes the decarboxylative condensation of pimeloyl-[acyl-carrier protein] and L-alanine to produce 8-amino-7-oxononanoate (AON), [acyl-carrier protein], and carbon dioxide. This Mycolicibacterium paratuberculosis (strain ATCC BAA-968 / K-10) (Mycobacterium paratuberculosis) protein is 8-amino-7-oxononanoate synthase.